Consider the following 122-residue polypeptide: Large ribosomal subunit protein uL14c (122 aa).

Belongs to the universal ribosomal protein uL14 family. Part of the 50S ribosomal subunit.

It localises to the plastid. Its subcellular location is the chloroplast. In terms of biological role, binds to 23S rRNA. This Calycanthus floridus var. glaucus (Eastern sweetshrub) protein is Large ribosomal subunit protein uL14c.